We begin with the raw amino-acid sequence, 252 residues long: Phosphate import ATP-binding protein PstB 1 (252 aa).

The ABC transporter domain maps to 6–247; sequence LQVSDLSVYY…PKHKETEDYI (242 aa). 38–45 serves as a coordination point for ATP; sequence GPSGSGKS.

The protein belongs to the ABC transporter superfamily. Phosphate importer (TC 3.A.1.7) family. The complex is composed of two ATP-binding proteins (PstB), two transmembrane proteins (PstC and PstA) and a solute-binding protein (PstS).

The protein localises to the cell membrane. The catalysed reaction is phosphate(out) + ATP + H2O = ADP + 2 phosphate(in) + H(+). Part of the ABC transporter complex PstSACB involved in phosphate import. Responsible for energy coupling to the transport system. This is Phosphate import ATP-binding protein PstB 1 from Streptococcus agalactiae serotype Ia (strain ATCC 27591 / A909 / CDC SS700).